The primary structure comprises 78 residues: Small ribosomal subunit protein uS17 (78 aa).

Belongs to the universal ribosomal protein uS17 family. As to quaternary structure, part of the 30S ribosomal subunit.

Its function is as follows. One of the primary rRNA binding proteins, it binds specifically to the 5'-end of 16S ribosomal RNA. This chain is Small ribosomal subunit protein uS17, found in Pelagibacter ubique (strain HTCC1062).